The following is a 328-amino-acid chain: Biotin synthase (328 aa).

A Radical SAM core domain is found at 43–272 (NVVQKASLLS…KSTVRLSAGR (230 aa)). Positions 58, 62, and 65 each coordinate [4Fe-4S] cluster. The [2Fe-2S] cluster site is built by Cys-103, Cys-135, Cys-195, and Arg-267.

It belongs to the radical SAM superfamily. Biotin synthase family. As to quaternary structure, homodimer. The cofactor is [4Fe-4S] cluster. Requires [2Fe-2S] cluster as cofactor.

The enzyme catalyses (4R,5S)-dethiobiotin + (sulfur carrier)-SH + 2 reduced [2Fe-2S]-[ferredoxin] + 2 S-adenosyl-L-methionine = (sulfur carrier)-H + biotin + 2 5'-deoxyadenosine + 2 L-methionine + 2 oxidized [2Fe-2S]-[ferredoxin]. It participates in cofactor biosynthesis; biotin biosynthesis; biotin from 7,8-diaminononanoate: step 2/2. Its function is as follows. Catalyzes the conversion of dethiobiotin (DTB) to biotin by the insertion of a sulfur atom into dethiobiotin via a radical-based mechanism. The polypeptide is Biotin synthase (Allorhizobium ampelinum (strain ATCC BAA-846 / DSM 112012 / S4) (Agrobacterium vitis (strain S4))).